The sequence spans 622 residues: MKTLLIHSDYLEFEAKEKTKIAEDADVLSGKMDECLTVFIAVEKDDESDPDAVVKNAVEEIVKTADNLKVKNVVVYPYAHLSSDLGSPATAKEILAEIEKELSGNYEVLRAPFGWYKAFKISCKGHPLSELSRKITTERKEEVKKEKIVSKFYIINGENLELTEVNDEIISKMEDKGLLALLKHELDIKEEGTEKGEPPHVKYIKEKEICDYEPSSDAGHFRWYPKGKLIRDLLSDYVYNLVVERGGMPVETPVMYDLQNNAIREHADKFGERQYRFKQGNKDLMLRFAACFGQFMMKKDMYLLPKHMPLKLYELSTYSFRYEQRGELVGLKRLRAFTMPDMHTVCIDMKQAMEAFEDQLWMGLKTGDDFKTPYAIIFRFTEDFFEENKDWFFGMAKEYKQKYGKDAILEILPGRKHYWVGKVDMAVVDSFGRPIENPTVQIDVESAERFGIVVHDGDKKVHPIILHCSPTGSVERVLCGLLENAYLNTLENKPPALPTWLTPIQARVIPVGDKHEEFALEVANKLRASGIRADFDDREDSMGKKVRNAGTDWVNYVVVIGDNEMETGKLTVTIREESELKKAKKEALTVEELIEKITSDVKDAPKRPLPLPMKCSVQPIFR.

The segment at 1 to 141 is editing domain; it reads MKTLLIHSDY…SRKITTERKE (141 aa). Residues 199–498 are catalytic; sequence PHVKYIKEKE…TLENKPPALP (300 aa). Zn(2+)-binding residues include Cys-291, His-343, and His-467.

This sequence belongs to the class-II aminoacyl-tRNA synthetase family. Homodimer. It depends on Zn(2+) as a cofactor.

Its subcellular location is the cytoplasm. The catalysed reaction is tRNA(Thr) + L-threonine + ATP = L-threonyl-tRNA(Thr) + AMP + diphosphate + H(+). Catalyzes the attachment of threonine to tRNA(Thr) in a two-step reaction: L-threonine is first activated by ATP to form Thr-AMP and then transferred to the acceptor end of tRNA(Thr). Also edits incorrectly charged L-seryl-tRNA(Thr). In Methanococcus maripaludis (strain C7 / ATCC BAA-1331), this protein is Threonine--tRNA ligase.